A 550-amino-acid polypeptide reads, in one-letter code: Arginine--tRNA ligase (550 aa).

The 'HIGH' region signature appears at Ala130–Gly140.

The protein belongs to the class-I aminoacyl-tRNA synthetase family. As to quaternary structure, monomer.

The protein localises to the cytoplasm. The catalysed reaction is tRNA(Arg) + L-arginine + ATP = L-arginyl-tRNA(Arg) + AMP + diphosphate. The protein is Arginine--tRNA ligase of Rhodococcus erythropolis (strain PR4 / NBRC 100887).